We begin with the raw amino-acid sequence, 500 residues long: Hexokinase-3 (500 aa).

Residues 4–24 form a helical membrane-spanning segment; the sequence is VGLGVAVGCAAVTCAIAAALV. In terms of domain architecture, Hexokinase spans 35–487; that stretch reads RRAVALLREF…SGVGAALLAA (453 aa). Residues 90 to 222 form a hexokinase small subdomain region; that stretch reads SGSEEGVYYS…GLNVRVTALV (133 aa). Residues G104, T105, and N106 each contribute to the ADP site. 4 residues coordinate D-glucose: T188, K189, N223, and D224. The interval 223–476 is hexokinase large subdomain; that stretch reads NDTVGTLALG…RNVTLRVTED (254 aa). S247 provides a ligand contact to ADP. The D-glucose site is built by N250, E278, and E309. G441 is an ADP binding site.

This sequence belongs to the hexokinase family. Expressed in roots, leaves, flowers, immature seeds and seed coat. Expressed in young shoots, tiller buds, endosperm seven days after fertilization, and interconnecting tissues such as pulvini and nodes.

The protein localises to the mitochondrion outer membrane. The enzyme catalyses a D-hexose + ATP = a D-hexose 6-phosphate + ADP + H(+). It carries out the reaction D-fructose + ATP = D-fructose 6-phosphate + ADP + H(+). The catalysed reaction is D-glucose + ATP = D-glucose 6-phosphate + ADP + H(+). It participates in carbohydrate metabolism; hexose metabolism. The protein operates within carbohydrate degradation; glycolysis; D-glyceraldehyde 3-phosphate and glycerone phosphate from D-glucose: step 1/4. In terms of biological role, fructose and glucose phosphorylating enzyme. Involved in the regulation of cell expansion in spikelet hulls, grain size, and gibberellin biosynthesis and homeostasis. The sequence is that of Hexokinase-3 from Oryza sativa subsp. japonica (Rice).